Reading from the N-terminus, the 651-residue chain is Coronin-like protein (651 aa).

WD repeat units lie at residues 79–110, 138–169, 180–210, and 226–257; these read GHTA…GIWD, GHAR…KLWN, KHPD…RVWN, and AKNQ…GIWD. Positions 408–609 are disordered; it reads APSFHEAKRP…TSPKSLGLKK (202 aa). Positions 427–451 are enriched in basic and acidic residues; sequence LEEKKEQPKVEKPISESEKEVKQEA. Residues S441, S454, and S456 each carry the phosphoserine modification. Low complexity predominate over residues 452 to 465; sequence PKSPSPLKSASSSS. A phosphothreonine mark is found at T517 and T529. Basic and acidic residues-rich tracts occupy residues 523–540 and 547–572; these read ETKK…ELKP and TDRK…EQEK. Phosphoserine occurs at positions 573 and 579. Residues 578–590 show a composition bias toward low complexity; it reads SSITAAKTAITAS. The stretch at 618–650 forms a coiled coil; sequence VLQLEDVVDKLTKANLDKDERLLKLEQKIGELS.

It belongs to the WD repeat coronin family. In terms of assembly, binds to F-actin.

This chain is Coronin-like protein (CRN1), found in Saccharomyces cerevisiae (strain ATCC 204508 / S288c) (Baker's yeast).